The primary structure comprises 544 residues: Ceramide glucosyltransferase (544 aa).

At 1 to 15 (MVQEELSLFRITTGY) the chain is on the lumenal side. The helical transmembrane segment at 16-36 (FFLLWYIIILVAAYSGFFEIL) threads the bilayer. Residues 37–427 (FNFRNRPILH…LATLIEPTTE (391 aa)) lie on the Cytoplasmic side of the membrane. D109 is a short sequence motif (D1). A short sequence motif (D2) is located at residue D171. D364 is a short sequence motif (D3). Residue D364 is the Proton acceptor of the active site. The (Q/R)XXRW motif lies at 404–408 (RRVRW). Residues 428 to 448 (SIICGIYGTYAISTVFFGTWF) form a helical membrane-spanning segment. The Lumenal portion of the chain corresponds to 449-451 (NKY). A helical transmembrane segment spans residues 452–472 (WFVMHMLIWMLTDYVQYHTLI). Over 473–501 (NHTLDVKNITYLPNWLNESIPPKQRNCLQ) the chain is Cytoplasmic. The chain crosses the membrane as a helical span at residues 502–522 (WGYIWILRELLALPIWIIAMI). At 523 to 544 (GHEIDWRGRPFRIKKDLTAEEM) the chain is on the lumenal side.

It belongs to the glycosyltransferase 2 family.

Its subcellular location is the golgi apparatus membrane. The catalysed reaction is an N-acylsphing-4-enine + UDP-alpha-D-glucose = a beta-D-glucosyl-(1&lt;-&gt;1')-N-acylsphing-4-enine + UDP + H(+). The protein operates within lipid metabolism; sphingolipid metabolism. Catalyzes the final step in the biosynthesis of the membrane lipid glucosylceramide (GluCer), the transfer of glucose to ceramide. Glucosylceramides play important roles in growth, differentiation and pathogenicity. The polypeptide is Ceramide glucosyltransferase (Candida albicans (strain SC5314 / ATCC MYA-2876) (Yeast)).